A 1146-amino-acid polypeptide reads, in one-letter code: MDSSSTTPLADYFWIAGIETIAYDDPLPSGSQVAASIAEDGEQQPEENGVNANGTGAPRHHARHSRQNSANRLSNSRFSIHTLDEIDGNTQSNRSSVTIRPAHAQGNGLPNEGVGPAPGIGLLDGFDFDDALVKFAAERENFLDDLTFSAGAKLQARPPMVNPRAERIKAEDSDQSGRRSPLRNLERSIKGSIRRKMSFRDMNSSRRQPVTPRASTPGAGAIPRQGSIRTTRRLSNYNSVIPPPEPLNTDPNMHPLKRRFEPVLLDRYPAKDVPEETARRGKFPDYVPMFAFPNDIQIVSSDDRPRSTWHGFTMTSDDNSKIYGITIIIWTALTSDVAEELEKRCEQWRQRHMSNEERELAASLGVRLAAERANLSSLLARLPSVPSGSSARDALDDQISTVEEKISLMTEMLRPLRHGAASKIDGLTAGESGLWSPRAYGILGRDVTRMAFWKDWLRAVLVPMTDGGVLRIPPSSPKVGRWQPLERYVVNLCTEAFSPLGSKTQVELGVRELKLYARQDAVNEIPGSRTIDIYALFRCLSLDNIVALFEYAMSESRIIFLSSHTGMLHLACHALVNLLYPLKWASIFIPVLPARLLSALEAPCPYIVGVERRYERIELPEDDYVLVDLDKDTIDATSQPVRLPRQHRRKLHALLQVAAPAKLRYGVATGPPPYAMESFPYDAFSAENPSLYNDYASPSTLAQWVAQNSSTFGEPSPASEVKPPIFNAFLHSKVDPNKPDRPGTSKSTRTSPPSSVSPVSINFPPMPTTPVSRSDSGFALTSTLREKRSRNFDEKTRRSSSFGVDKHGPLHRPSIPFLNGNGHAPSMSISAISVDSQPYTHSSYGGGYAPSTYAQSTLAASTIMPNMLIQPVFNTETTVWVEGHCFNWEEGALSSSCSVCDDRAEGDGIYKCSGCSAFAHGRCLGCVSLACHQSFYPDRVRAAFVRCLASLLYTYRKHLGRPSKDQKNNGRMYAFDMDGFIKSLPYDQQEYANMMRETQAFNEFIHERETKPGTTASIRFFDEVIMAKKARGRPGIVSGLSRLSTIRSSHGASSNSSAFSPPSRLKIPTYLSDTSDHMWRTASVPVPSAKFPGDYRSIVTRIPARLDTSLMREPRVIQGVPRPEQRGTRGLVRKQVPSMLGTSPTN.

Disordered stretches follow at residues 25-75 and 156-226; these read DPLP…RLSN and ARPP…PRQG. Residues 164-177 show a composition bias toward basic and acidic residues; it reads RAERIKAEDSDQSG. Residues 246–500 form the uDENN domain; the sequence is PLNTDPNMHP…NLCTEAFSPL (255 aa). The cDENN domain maps to 522–656; sequence VNEIPGSRTI…HRRKLHALLQ (135 aa). Residues 658-1016 form the dDENN domain; that stretch reads AAPAKLRYGV…ERETKPGTTA (359 aa). The tract at residues 730–806 is disordered; the sequence is LHSKVDPNKP…RRSSSFGVDK (77 aa). Over residues 732–743 the composition is skewed to basic and acidic residues; it reads SKVDPNKPDRPG. Positions 744-760 are enriched in low complexity; that stretch reads TSKSTRTSPPSSVSPVS. A compositionally biased stretch (polar residues) spans 769 to 783; sequence TPVSRSDSGFALTST. Residues 784 to 797 are compositionally biased toward basic and acidic residues; sequence LREKRSRNFDEKTR. The segment at 883-931 adopts a Phorbol-ester/DAG-type zinc-finger fold; it reads GHCFNWEEGALSSSCSVCDDRAEGDGIYKCSGCSAFAHGRCLGCVSLAC. Residues 1121-1146 form a disordered region; it reads PRPEQRGTRGLVRKQVPSMLGTSPTN.

It belongs to the EPD1 elicitor family. In terms of assembly, interacts with host cotton EIR5A (AC A0A5J5T2N2) and EIR5D (AC A0A5J5NT52) and host N.benthamiana EIR (AC P0DXJ0).

The protein resides in the secreted. Its subcellular location is the host cell. Functionally, acts as an elicitor that triggers defense responses in both Nicotiana benthamiana and cotton plants. Triggers the accumulation of reactive oxygen species (ROS) and the activation of cell death in cotton plants. Induces significantly enhanced resistance of Nicotiana benthamiana to both the broad-host-range filamentous pathogen Botrytis cinerea and the semibiotrophic pathogen Phytophthora capsici. Stimulates the expression of EIR5A (AC A0A5J5T2N2) and EIR5D (AC A0A5J5NT52) in cotton plants and recognition of EPD1 potentiates EIRs to enhance cotton PAMP-triggered immunity (PTI). This chain is Elicitor of plant defense protein 1, found in Verticillium dahliae (strain VdLs.17 / ATCC MYA-4575 / FGSC 10137) (Verticillium wilt).